Reading from the N-terminus, the 386-residue chain is Succinate--CoA ligase [ADP-forming] subunit beta (386 aa).

An ATP-grasp domain is found at 9–244 (KELFANYGVP…LDEEEPLEVE (236 aa)). ATP is bound by residues Lys46, 53–55 (GRG), Glu99, Leu102, and Glu107. Residues Asn199 and Asp213 each coordinate Mg(2+). Residues Asn264 and 321–323 (GIL) contribute to the substrate site.

The protein belongs to the succinate/malate CoA ligase beta subunit family. Heterotetramer of two alpha and two beta subunits. Mg(2+) is required as a cofactor.

The enzyme catalyses succinate + ATP + CoA = succinyl-CoA + ADP + phosphate. It catalyses the reaction GTP + succinate + CoA = succinyl-CoA + GDP + phosphate. Its pathway is carbohydrate metabolism; tricarboxylic acid cycle; succinate from succinyl-CoA (ligase route): step 1/1. Functionally, succinyl-CoA synthetase functions in the citric acid cycle (TCA), coupling the hydrolysis of succinyl-CoA to the synthesis of either ATP or GTP and thus represents the only step of substrate-level phosphorylation in the TCA. The beta subunit provides nucleotide specificity of the enzyme and binds the substrate succinate, while the binding sites for coenzyme A and phosphate are found in the alpha subunit. The polypeptide is Succinate--CoA ligase [ADP-forming] subunit beta (Desulfatibacillum aliphaticivorans).